Here is a 96-residue protein sequence, read N- to C-terminus: Large ribosomal subunit protein uL23 (96 aa).

It belongs to the universal ribosomal protein uL23 family. Part of the 50S ribosomal subunit. Contacts protein L29, and trigger factor when it is bound to the ribosome.

In terms of biological role, one of the early assembly proteins it binds 23S rRNA. One of the proteins that surrounds the polypeptide exit tunnel on the outside of the ribosome. Forms the main docking site for trigger factor binding to the ribosome. The polypeptide is Large ribosomal subunit protein uL23 (Finegoldia magna (strain ATCC 29328 / DSM 20472 / WAL 2508) (Peptostreptococcus magnus)).